The primary structure comprises 290 residues: uncharacterized protein (290 aa).

It belongs to the UreD family.

Its subcellular location is the cytoplasm. The protein resides in the nucleus. Probably facilitates nickel incorporation. This is an uncharacterized protein from Schizosaccharomyces pombe (strain 972 / ATCC 24843) (Fission yeast).